The following is a 205-amino-acid chain: Holliday junction branch migration complex subunit RuvA (205 aa).

Residues 1-64 are domain I; it reads MIGKLKGTID…EDQLKLFGFL (64 aa). The tract at residues 65 to 143 is domain II; it reads SALEREWFRL…AFVGEMAPSI (79 aa). Positions 144–153 are flexible linker; the sequence is GLKQELGEGV. Positions 153 to 205 are domain III; sequence VAAAPVSDAVSALTNLGYSRDQAANAVAAALKNGGEGADSARLIRLGLKELSR.

The protein belongs to the RuvA family. In terms of assembly, homotetramer. Forms an RuvA(8)-RuvB(12)-Holliday junction (HJ) complex. HJ DNA is sandwiched between 2 RuvA tetramers; dsDNA enters through RuvA and exits via RuvB. An RuvB hexamer assembles on each DNA strand where it exits the tetramer. Each RuvB hexamer is contacted by two RuvA subunits (via domain III) on 2 adjacent RuvB subunits; this complex drives branch migration. In the full resolvosome a probable DNA-RuvA(4)-RuvB(12)-RuvC(2) complex forms which resolves the HJ.

Its subcellular location is the cytoplasm. In terms of biological role, the RuvA-RuvB-RuvC complex processes Holliday junction (HJ) DNA during genetic recombination and DNA repair, while the RuvA-RuvB complex plays an important role in the rescue of blocked DNA replication forks via replication fork reversal (RFR). RuvA specifically binds to HJ cruciform DNA, conferring on it an open structure. The RuvB hexamer acts as an ATP-dependent pump, pulling dsDNA into and through the RuvAB complex. HJ branch migration allows RuvC to scan DNA until it finds its consensus sequence, where it cleaves and resolves the cruciform DNA. In Sinorhizobium medicae (strain WSM419) (Ensifer medicae), this protein is Holliday junction branch migration complex subunit RuvA.